Reading from the N-terminus, the 352-residue chain is UDP-N-acetylglucosamine--N-acetylmuramyl-(pentapeptide) pyrophosphoryl-undecaprenol N-acetylglucosamine transferase (352 aa).

UDP-N-acetyl-alpha-D-glucosamine contacts are provided by residues Thr11–Gly13, Asn120, Arg161, Ser188, and Gln286.

This sequence belongs to the glycosyltransferase 28 family. MurG subfamily.

It localises to the cell inner membrane. It catalyses the reaction di-trans,octa-cis-undecaprenyl diphospho-N-acetyl-alpha-D-muramoyl-L-alanyl-D-glutamyl-meso-2,6-diaminopimeloyl-D-alanyl-D-alanine + UDP-N-acetyl-alpha-D-glucosamine = di-trans,octa-cis-undecaprenyl diphospho-[N-acetyl-alpha-D-glucosaminyl-(1-&gt;4)]-N-acetyl-alpha-D-muramoyl-L-alanyl-D-glutamyl-meso-2,6-diaminopimeloyl-D-alanyl-D-alanine + UDP + H(+). The protein operates within cell wall biogenesis; peptidoglycan biosynthesis. Cell wall formation. Catalyzes the transfer of a GlcNAc subunit on undecaprenyl-pyrophosphoryl-MurNAc-pentapeptide (lipid intermediate I) to form undecaprenyl-pyrophosphoryl-MurNAc-(pentapeptide)GlcNAc (lipid intermediate II). The chain is UDP-N-acetylglucosamine--N-acetylmuramyl-(pentapeptide) pyrophosphoryl-undecaprenol N-acetylglucosamine transferase from Prochlorococcus marinus (strain NATL1A).